The sequence spans 445 residues: MVESIAAGQVGDNKHIEMWKIKRLINKLENCKGNGTSMVSLIIPPKEDINKSGKLLVGELSAAQNIKSRITRQSVITAITSTKEKLKLYRQTPTNGLCIYCGVILMEDGKTEKKINFDFEPFRPINQFMYFCGGKFQTEPLTTLLADDDKFGFIIVDGNGALYATLQGNSREILQKITVELPKKHRKGGQSSVRFARLREEKRHNYLRKVAELAGSNFITNDKPNVTGLVLAGNAGFKNELSETDMLDKRLLPIIVSIVDVSYGGENGLNEAITLSADALTNVKFVAEKKLVSKFFEEISLDTGMIVFGVQDTMKALELGAVETILLFEELEITRYVIKNPVKGDTRTLFLNPTQQKDSKYFKDQASGLDMDVISEDQLAEWLCHNYQNYXAQVEFITDKSQEGYQFVKGFGGIGGFLRYKVDMEEALGDVGDGGDDFDPDTDFI.

The protein belongs to the eukaryotic release factor 1 family. In terms of assembly, heterodimer of two subunits, one of which binds GTP.

The protein localises to the cytoplasm. Directs the termination of nascent peptide synthesis (translation) in response to the termination codon UGA. In Stylonchia UAA and UAG codes for glutamine. The chain is Eukaryotic peptide chain release factor subunit 1 (ERF1) from Stylonychia mytilus (Ciliate).